The following is a 412-amino-acid chain: Gamma-glutamyl phosphate reductase (412 aa).

This sequence belongs to the gamma-glutamyl phosphate reductase family.

The protein resides in the cytoplasm. The catalysed reaction is L-glutamate 5-semialdehyde + phosphate + NADP(+) = L-glutamyl 5-phosphate + NADPH + H(+). It functions in the pathway amino-acid biosynthesis; L-proline biosynthesis; L-glutamate 5-semialdehyde from L-glutamate: step 2/2. Catalyzes the NADPH-dependent reduction of L-glutamate 5-phosphate into L-glutamate 5-semialdehyde and phosphate. The product spontaneously undergoes cyclization to form 1-pyrroline-5-carboxylate. This chain is Gamma-glutamyl phosphate reductase, found in Bartonella bacilliformis (strain ATCC 35685 / KC583 / Herrer 020/F12,63).